The chain runs to 69 residues: MANNNSSNNNELLVYGAEQAIDQMKYEIASEFGVNLGADTTARANGSVGGEITKRLVQLAEQQLGGGRF.

This sequence belongs to the alpha/beta-type SASP family.

Its function is as follows. SASP are bound to spore DNA. They are double-stranded DNA-binding proteins that cause DNA to change to an a-like conformation. They protect the DNA backbone from chemical and enzymatic cleavage and are thus involved in dormant spore's high resistance to UV light. The polypeptide is Small, acid-soluble spore protein C1 (SASP-C1) (Priestia megaterium (Bacillus megaterium)).